The chain runs to 192 residues: Ion-translocating oxidoreductase complex subunit A (192 aa).

The next 6 helical transmembrane spans lie at 5 to 25 (LLLL…FLGL), 39 to 59 (IGMG…AYLV), 63 to 83 (ILTP…VIAV), 102 to 122 (LLGI…VALL), 134 to 154 (IIYG…FAAM), and 171 to 191 (SIAM…TGLV).

Belongs to the NqrDE/RnfAE family. In terms of assembly, the complex is composed of six subunits: RnfA, RnfB, RnfC, RnfD, RnfE and RnfG.

The protein resides in the cell inner membrane. Functionally, part of a membrane-bound complex that couples electron transfer with translocation of ions across the membrane. This Vibrio atlanticus (strain LGP32) (Vibrio splendidus (strain Mel32)) protein is Ion-translocating oxidoreductase complex subunit A.